Reading from the N-terminus, the 430-residue chain is Probable sulfoacetate transporter SauU (430 aa).

Transmembrane regions (helical) follow at residues 47 to 67 (LGLVFSAFAYPYAAMQILGGW), 83 to 103 (LIWGVATVLTGFAGSVLILVV), 142 to 162 (FARLGGAITPPVVLVIVAAAG), 165 to 185 (EAFIVLGAVSLGWTLLYAFFF), 228 to 248 (WLVTFVDFCYGWSLWVYLTWL), 263 to 283 (LALFTALPLMAGVVGDTLGGV), 301 to 321 (AVLFVGLAGSLMFIAPMTFTA), 327 to 347 (VILLSLSFFFLELTNAVLWSL), 362 to 382 (MMNTGFGVAGMVSPVVFGYLI), and 390 to 410 (LPFMISGALLGVGALASLFIN).

It belongs to the major facilitator superfamily.

The protein resides in the cell membrane. Functionally, may transport sulfoacetate into the cell. The protein is Probable sulfoacetate transporter SauU (sauU) of Cupriavidus necator (strain ATCC 17699 / DSM 428 / KCTC 22496 / NCIMB 10442 / H16 / Stanier 337) (Ralstonia eutropha).